We begin with the raw amino-acid sequence, 870 residues long: Protein translocase subunit SecA (870 aa).

Residues glutamine 86, 104–108 (GEGKT), and aspartate 499 contribute to the ATP site. Zn(2+)-binding residues include cysteine 854, cysteine 856, cysteine 865, and histidine 866.

Belongs to the SecA family. As to quaternary structure, monomer and homodimer. Part of the essential Sec protein translocation apparatus which comprises SecA, SecYEG and auxiliary proteins SecDF-YajC and YidC. Zn(2+) is required as a cofactor.

It is found in the cell inner membrane. The protein resides in the cytoplasm. The catalysed reaction is ATP + H2O + cellular proteinSide 1 = ADP + phosphate + cellular proteinSide 2.. Its function is as follows. Part of the Sec protein translocase complex. Interacts with the SecYEG preprotein conducting channel. Has a central role in coupling the hydrolysis of ATP to the transfer of proteins into and across the cell membrane, serving both as a receptor for the preprotein-SecB complex and as an ATP-driven molecular motor driving the stepwise translocation of polypeptide chains across the membrane. In Ehrlichia ruminantium (strain Welgevonden), this protein is Protein translocase subunit SecA.